The following is a 602-amino-acid chain: Prostaglandin G/H synthase 1 (602 aa).

The first 26 residues, 1-26, serve as a signal peptide directing secretion; sequence MSRRSLSLQFPLLLLLLLLPPPPVLL. The EGF-like domain maps to 34–72; it reads PVNPCCYYPCQNQGVCVRFGLDHYQCDCTRTGYSGPNCT. Disulfide bonds link Cys-38–Cys-49, Cys-39–Cys-161, Cys-43–Cys-59, and Cys-61–Cys-71. 3 N-linked (GlcNAc...) asparagine glycosylation sites follow: Asn-70, Asn-106, and Asn-146. His-209 acts as the Proton acceptor in catalysis. The active-site For cyclooxygenase activity is the Tyr-387. His-390 provides a ligand contact to heme b. A glycan (N-linked (GlcNAc...) asparagine) is linked at Asn-412. A disulfide bond links Cys-571 and Cys-577.

The protein belongs to the prostaglandin G/H synthase family. In terms of assembly, homodimer. The cofactor is heme b.

The protein localises to the microsome membrane. It localises to the endoplasmic reticulum membrane. It carries out the reaction (5Z,8Z,11Z,14Z)-eicosatetraenoate + AH2 + 2 O2 = prostaglandin H2 + A + H2O. The enzyme catalyses (5Z,8Z,11Z,14Z)-eicosatetraenoate + 2 O2 = prostaglandin G2. It catalyses the reaction prostaglandin G2 + AH2 = prostaglandin H2 + A + H2O. The catalysed reaction is (9Z,12Z)-octadecadienoate + AH2 + O2 = (9R)-hydroxy-(10E,12Z)-octadecadienoate + A + H2O. It carries out the reaction (9Z,12Z)-octadecadienoate + AH2 + O2 = (9S)-hydroxy-(10E,12Z)-octadecadienoate + A + H2O. The enzyme catalyses (9Z,12Z)-octadecadienoate + AH2 + O2 = (13S)-hydroxy-(9Z,11E)-octadecadienoate + A + H2O. It catalyses the reaction (9Z,12Z)-octadecadienoate + AH2 + O2 = (13R)-hydroxy-(9Z,11E)-octadecadienoate + A + H2O. Its pathway is lipid metabolism; prostaglandin biosynthesis. With respect to regulation, the cyclooxygenase activity is inhibited by nonsteroidal anti-inflammatory drugs (NSAIDs) including ibuprofen, flurbiprofen, ketoprofen, naproxen, flurbiprofen, anirolac, fenclofenac and diclofenac. Functionally, dual cyclooxygenase and peroxidase that plays an important role in the biosynthesis pathway of prostanoids, a class of C20 oxylipins mainly derived from arachidonate ((5Z,8Z,11Z,14Z)-eicosatetraenoate, AA, C20:4(n-6)), with a particular role in the inflammatory response. The cyclooxygenase activity oxygenates AA to the hydroperoxy endoperoxide prostaglandin G2 (PGG2), and the peroxidase activity reduces PGG2 to the hydroxy endoperoxide prostaglandin H2 (PGH2), the precursor of all 2-series prostaglandins and thromboxanes. This complex transformation is initiated by abstraction of hydrogen at carbon 13 (with S-stereochemistry), followed by insertion of molecular O2 to form the endoperoxide bridge between carbon 9 and 11 that defines prostaglandins. The insertion of a second molecule of O2 (bis-oxygenase activity) yields a hydroperoxy group in PGG2 that is then reduced to PGH2 by two electrons. Involved in the constitutive production of prostanoids in particular in the stomach and platelets. In gastric epithelial cells, it is a key step in the generation of prostaglandins, such as prostaglandin E2 (PGE2), which plays an important role in cytoprotection. In platelets, it is involved in the generation of thromboxane A2 (TXA2), which promotes platelet activation and aggregation, vasoconstriction and proliferation of vascular smooth muscle cells. Can also use linoleate (LA, (9Z,12Z)-octadecadienoate, C18:2(n-6)) as substrate and produce hydroxyoctadecadienoates (HODEs) in a regio- and stereospecific manner, being (9R)-HODE ((9R)-hydroxy-(10E,12Z)-octadecadienoate) and (13S)-HODE ((13S)-hydroxy-(9Z,11E)-octadecadienoate) its major products. This chain is Prostaglandin G/H synthase 1, found in Rattus norvegicus (Rat).